The sequence spans 1551 residues: Dual oxidase 1 (1551 aa).

The first 21 residues, 1–21 (MAVYSAVAWILLFGVLASLGA), serve as a signal peptide directing secretion. Topologically, residues 22-596 (QNPVSWEVQR…YFKGSGFGFG (575 aa)) are extracellular. A peroxidase-like; mediates peroxidase activity region spans residues 26 to 593 (SWEVQRFDGW…VRDYFKGSGF (568 aa)). 5 N-linked (GlcNAc...) asparagine glycosylation sites follow: N94, N342, N354, N461, and N534. Residues 597 to 617 (LTIGTLCCFPLVSLLSAWIVA) traverse the membrane as a helical segment. At 618–1044 (RLRMRNFKRL…KRFIENYRRH (427 aa)) the chain is on the cytoplasmic side. 3 EF-hand domains span residues 815–850 (PQDM…FMKG), 851–886 (SPEE…FIEI), and 895–930 (QLAE…HDSD). Positions 828, 830, 832, 834, 839, 864, 866, 868, and 875 each coordinate Ca(2+). Residues 956-1248 (YISQEKICPS…GSFALIQMPR (293 aa)) are interaction with TXNDC11. Residues 1045-1065 (IGCVAVFYTITGALFLERAYY) form a helical membrane-spanning segment. Residues 1066–1080 (YAFAAHHSGITDTTR) are Extracellular-facing. Residues 1081 to 1101 (VGIILSRGTAASISFMFSYIL) traverse the membrane as a helical segment. Residues 1087 to 1269 (RGTAASISFM…YVGDKLVSLS (183 aa)) enclose the Ferric oxidoreductase domain. At 1102-1136 (LTMCRNLITFLRETFLNRYIPFDAAVDFHRFIAST) the chain is on the cytoplasmic side. The chain crosses the membrane as a helical span at residues 1137–1157 (AIILTVLHSAGHVVNVYLFSI). The Extracellular portion of the chain corresponds to 1158-1188 (SPLSVLSCLFPDLFHDDGSEFPQKYYWWFFQ). A helical transmembrane segment spans residues 1189–1209 (TVPGLTGVLLLLALAIMYVFA). At 1210 to 1226 (SHHFRRRSFRGFWLTHH) the chain is on the cytoplasmic side. Residues 1227-1247 (LYIFLYILLIIHGSFALIQMP) traverse the membrane as a helical segment. Position 1248 (R1248) is a topological domain, extracellular. A helical transmembrane segment spans residues 1249-1269 (FHIFFLVPAIIYVGDKLVSLS). One can recognise an FAD-binding FR-type domain in the interval 1270 to 1376 (RKKVEISVVK…DGPFGEGHQE (107 aa)). The Cytoplasmic portion of the chain corresponds to 1270–1551 (RKKVEISVVK…THFSHHYENF (282 aa)).

It in the N-terminal section; belongs to the peroxidase family. In terms of assembly, interacts with TXNDC11, TPO and CYBA. Post-translationally, N-glycosylated. As to expression, expressed in thyrocytes (at protein level).

It is found in the apical cell membrane. It carries out the reaction NADH + O2 + H(+) = H2O2 + NAD(+). It catalyses the reaction NADPH + O2 + H(+) = H2O2 + NADP(+). It participates in hormone biosynthesis; thyroid hormone biosynthesis. Its activity is regulated as follows. The NADPH oxidase activity is calcium-dependent. Peroxidase activity is inhibited by aminobenzohydrazide. Generates hydrogen peroxide which is required for the activity of thyroid peroxidase/TPO and lactoperoxidase/LPO. Plays a role in thyroid hormones synthesis and lactoperoxidase-mediated antimicrobial defense at the surface of mucosa. May have its own peroxidase activity through its N-terminal peroxidase-like domain. The protein is Dual oxidase 1 (Duox1) of Rattus norvegicus (Rat).